A 311-amino-acid polypeptide reads, in one-letter code: 4-hydroxy-3-methylbut-2-enyl diphosphate reductase (311 aa).

Cys12 is a binding site for [4Fe-4S] cluster. Residues His43 and His81 each coordinate (2E)-4-hydroxy-3-methylbut-2-enyl diphosphate. Residues His43 and His81 each contribute to the dimethylallyl diphosphate site. 2 residues coordinate isopentenyl diphosphate: His43 and His81. Position 103 (Cys103) interacts with [4Fe-4S] cluster. His131 contributes to the (2E)-4-hydroxy-3-methylbut-2-enyl diphosphate binding site. Position 131 (His131) interacts with dimethylallyl diphosphate. Residue His131 participates in isopentenyl diphosphate binding. Residue Glu133 is the Proton donor of the active site. Thr170 serves as a coordination point for (2E)-4-hydroxy-3-methylbut-2-enyl diphosphate. Residue Cys198 coordinates [4Fe-4S] cluster. (2E)-4-hydroxy-3-methylbut-2-enyl diphosphate is bound by residues Ser226, Asn228, and Ser271. Dimethylallyl diphosphate contacts are provided by Ser226, Asn228, and Ser271. Isopentenyl diphosphate-binding residues include Ser226, Asn228, and Ser271.

Belongs to the IspH family. [4Fe-4S] cluster is required as a cofactor.

The enzyme catalyses isopentenyl diphosphate + 2 oxidized [2Fe-2S]-[ferredoxin] + H2O = (2E)-4-hydroxy-3-methylbut-2-enyl diphosphate + 2 reduced [2Fe-2S]-[ferredoxin] + 2 H(+). It catalyses the reaction dimethylallyl diphosphate + 2 oxidized [2Fe-2S]-[ferredoxin] + H2O = (2E)-4-hydroxy-3-methylbut-2-enyl diphosphate + 2 reduced [2Fe-2S]-[ferredoxin] + 2 H(+). It functions in the pathway isoprenoid biosynthesis; dimethylallyl diphosphate biosynthesis; dimethylallyl diphosphate from (2E)-4-hydroxy-3-methylbutenyl diphosphate: step 1/1. Its pathway is isoprenoid biosynthesis; isopentenyl diphosphate biosynthesis via DXP pathway; isopentenyl diphosphate from 1-deoxy-D-xylulose 5-phosphate: step 6/6. In terms of biological role, catalyzes the conversion of 1-hydroxy-2-methyl-2-(E)-butenyl 4-diphosphate (HMBPP) into a mixture of isopentenyl diphosphate (IPP) and dimethylallyl diphosphate (DMAPP). Acts in the terminal step of the DOXP/MEP pathway for isoprenoid precursor biosynthesis. The protein is 4-hydroxy-3-methylbut-2-enyl diphosphate reductase of Brevibacillus brevis (strain 47 / JCM 6285 / NBRC 100599).